We begin with the raw amino-acid sequence, 234 residues long: Ribosomal RNA small subunit methyltransferase G (234 aa).

S-adenosyl-L-methionine contacts are provided by residues Gly74, Phe79, 125–126 (AE), and Arg144.

Belongs to the methyltransferase superfamily. RNA methyltransferase RsmG family.

The protein resides in the cytoplasm. Specifically methylates the N7 position of a guanine in 16S rRNA. In Roseiflexus sp. (strain RS-1), this protein is Ribosomal RNA small subunit methyltransferase G.